A 240-amino-acid polypeptide reads, in one-letter code: Small ribosomal subunit protein uS2c (240 aa).

This sequence belongs to the universal ribosomal protein uS2 family.

It localises to the plastid. The protein localises to the chloroplast. The sequence is that of Small ribosomal subunit protein uS2c (rps2) from Cycas taitungensis (Prince sago).